Here is a 265-residue protein sequence, read N- to C-terminus: uncharacterized protein (265 aa).

The signal sequence occupies residues 1 to 23 (MNYFRILYCSVLLFFSFFSCTSA). A NodB homology domain is found at 67 to 248 (KEIYLTFDNG…TLKQQGYTFK (182 aa)).

This sequence belongs to the polysaccharide deacetylase family.

This is an uncharacterized protein from Geobacillus stearothermophilus (Bacillus stearothermophilus).